The following is a 572-amino-acid chain: Hemagglutinin-neuraminidase (572 aa).

Topologically, residues Met-1 to Lys-31 are intravirion. A helical transmembrane segment spans residues Ile-32–Leu-52. Residues Ile-53–Ser-572 are Virion surface-facing. Cystine bridges form between Cys-190–Cys-214 and Cys-256–Cys-269. The segment at Asn-252–Ser-257 is involved in neuraminidase activity. N-linked (GlcNAc...) asparagine; by host glycans are attached at residues Asn-308 and Asn-351. Cystine bridges form between Cys-355–Cys-469 and Cys-463–Cys-473. Asn-523 is a glycosylation site (N-linked (GlcNAc...) asparagine; by host). Cys-535 and Cys-544 are oxidised to a cystine.

It belongs to the paramyxoviruses hemagglutinin-neuraminidase family. In terms of assembly, homotetramer; composed of disulfide-linked homodimers. Interacts with F protein trimer.

The protein resides in the virion membrane. It is found in the host cell membrane. The enzyme catalyses Hydrolysis of alpha-(2-&gt;3)-, alpha-(2-&gt;6)-, alpha-(2-&gt;8)- glycosidic linkages of terminal sialic acid residues in oligosaccharides, glycoproteins, glycolipids, colominic acid and synthetic substrates.. In terms of biological role, attaches the virus to sialic acid-containing cell receptors and thereby initiating infection. Binding of HN protein to the receptor induces a conformational change that allows the F protein to trigger virion/cell membranes fusion. Functionally, neuraminidase activity ensures the efficient spread of the virus by dissociating the mature virions from the neuraminic acid containing glycoproteins. This Homo sapiens (Human) protein is Hemagglutinin-neuraminidase (HN).